Here is a 268-residue protein sequence, read N- to C-terminus: Microtubule-associated protein RP/EB family member 1 (268 aa).

Ala-2 bears the N-acetylalanine mark. Positions 14–116 constitute a Calponin-homology (CH) domain; it reads NLSRHDMLAW…FVQWFKKFFD (103 aa). The residue at position 66 (Lys-66) is an N6-crotonyllysine. Tyr-124 is modified (phosphotyrosine). The tract at residues 124-268 is interaction with MTUS2/TIP150; it reads YDPVAARQGQ…GGPQEEQEEY (145 aa). Residues 146–187 form a disordered region; the sequence is LNKPKKPLTSSSAAPQRPISTQRTAAAPKAGPGVVRKNPGVG. A compositionally biased stretch (polar residues) spans 153–169; that stretch reads LTSSSAAPQRPISTQRT. Residues Ser-155 and Ser-165 each carry the phosphoserine modification. The EB1 C-terminal domain occupies 185 to 255; sequence GVGNGDDEAA…LYATDEGFVI (71 aa). An interaction with CDK5RAP2 region spans residues 185 to 268; the sequence is GVGNGDDEAA…GGPQEEQEEY (84 aa). An interaction with APC region spans residues 206–211; that stretch reads TVEDLE. The DCTN1-binding stretch occupies residues 208-268; that stretch reads EDLEKERDFY…GGPQEEQEEY (61 aa). Position 220 is an N6-acetyllysine (Lys-220). The segment at 220-242 is APC-binding; sequence KLRNIELICQENEGENDPVLQRI. The tract at residues 232–255 is interaction with SKA1; that stretch reads EGENDPVLQRIVDILYATDEGFVI.

Belongs to the MAPRE family. As to quaternary structure, homodimer. Heterodimer with MAPRE3. Interacts with DCTN1, DCTN2, TERF1 and dynein intermediate chain. Interaction with DIAPH1 and DIAPH2. Interacts (via C-terminal residues 206-211) with APC (via C-terminal residues 2674-2843); the interaction inhibits association with and bundling of F-actin. Interacts with CLASP2, DST, KIF2C and STIM1; probably required for their targeting to the growing microtubule plus ends. Interacts with MTUS2; interaction is direct and probably targets MTUS2 to microtubules. Interacts (via C-terminus) with SKA1 (via SXIP motif); the interaction is direct and stabilizes the kinetochore-microtubule attachment of the SKA1 complex. Interacts with APC2. Interacts with CLASP1. Interacts with CDK5RAP2. Interacts with MACF1. Interacts with RABL2/RABL2A; binds preferentially to GTP-bound RABL2. Interacts with KCNAB2. Interacts (via C-terminus) with CLIP1. Interacts with SLAIN2 and SLAIN1. Interacts with KIF18B; this interaction is required for efficient accumulation of KIF18B at microtubule plus ends. Interacts with MISP. Interacts with KNSTRN. Interacts with NCKAP5L. Interacts with CAMSAP2. Interacts with PDE4DIP isoform 13/MMG8/SMYLE; this interaction is required for its recruitment to the Golgi apparatus. Forms a pericentrosomal complex with AKAP9, CDK5RAP2 and PDE4DIP isoform 13/MMG8/SMYLE; within this complex, MAPRE1 binding to CDK5RAP2 may be mediated by PDE4DIP. Interacts with AKNA. Interacts with GAS2L1, GAS2L2, and GAS2L3. Interacts with RARRES1 and AGBL2. In terms of processing, acetylation at Lys-220 by KAT2B/PCAF promotes dynamic kinetochore-microtubule interactions in early mitosis. Post-translationally, crotonylated by KAT5 during mitosis, promoting astral microtubule plasticity and dynamic connection between astral microtubules and the cortex during mitotic chromosome segregation, thereby ensuring accurate spindle positioning in mitosis. Decrotonylated by HDAC3. Ubiquitously expressed.

The protein resides in the cytoplasm. It localises to the cytoskeleton. Its subcellular location is the microtubule organizing center. The protein localises to the centrosome. It is found in the golgi apparatus. The protein resides in the spindle. It localises to the spindle pole. Its function is as follows. Plus-end tracking protein (+TIP) that binds to the plus-end of microtubules and regulates the dynamics of the microtubule cytoskeleton. Recruits other +TIP proteins to microtubules by binding to a conserved Ser-X-Leu-Pro (SXLP) motif in their polypeptide chains. Promotes cytoplasmic microtubule nucleation and elongation. Involved in mitotic spindle positioning by stabilizing microtubules and promoting dynamic connection between astral microtubules and the cortex during mitotic chromosome segregation. Assists chromosome alignment in metaphase by recruiting the SKA complex to the spindle and stabilizing its interactions with microtubule bundles (K-fibers). Also acts as a regulator of minus-end microtubule organization: interacts with the complex formed by AKAP9 and PDE4DIP, leading to recruit CAMSAP2 to the Golgi apparatus, thereby tethering non-centrosomal minus-end microtubules to the Golgi, an important step for polarized cell movement. Promotes elongation of CAMSAP2-decorated microtubule stretches on the minus-end of microtubules. Acts as a regulator of autophagosome transport via interaction with CAMSAP2. Functions downstream of Rho GTPases and DIAPH1 in stable microtubule formation. May play a role in cell migration. The sequence is that of Microtubule-associated protein RP/EB family member 1 from Homo sapiens (Human).